A 369-amino-acid polypeptide reads, in one-letter code: S-adenosylmethionine decarboxylase proenzyme 2 (369 aa).

Catalysis depends on residues glutamate 9 and glutamate 12. Serine 69 serves as the catalytic Schiff-base intermediate with substrate; via pyruvic acid. Position 69 is a pyruvic acid (Ser); by autocatalysis (serine 69). Cysteine 83 serves as the catalytic Proton donor; for catalytic activity. Active-site proton acceptor; for processing activity residues include serine 236 and histidine 249.

Belongs to the eukaryotic AdoMetDC family. Pyruvate is required as a cofactor. Is synthesized initially as an inactive proenzyme. Formation of the active enzyme involves a self-maturation process in which the active site pyruvoyl group is generated from an internal serine residue via an autocatalytic post-translational modification. Two non-identical subunits are generated from the proenzyme in this reaction, and the pyruvate is formed at the N-terminus of the alpha chain, which is derived from the carboxyl end of the proenzyme. The post-translation cleavage follows an unusual pathway, termed non-hydrolytic serinolysis, in which the side chain hydroxyl group of the serine supplies its oxygen atom to form the C-terminus of the beta chain, while the remainder of the serine residue undergoes an oxidative deamination to produce ammonia and the pyruvoyl group blocking the N-terminus of the alpha chain.

It catalyses the reaction S-adenosyl-L-methionine + H(+) = S-adenosyl 3-(methylsulfanyl)propylamine + CO2. The protein operates within amine and polyamine biosynthesis; S-adenosylmethioninamine biosynthesis; S-adenosylmethioninamine from S-adenosyl-L-methionine: step 1/1. The protein is S-adenosylmethionine decarboxylase proenzyme 2 (SAMDC2) of Brassica juncea (Indian mustard).